We begin with the raw amino-acid sequence, 1143 residues long: Probable ATP-dependent RNA helicase DHX34 (1143 aa).

Disordered stretches follow at residues 1 to 24 and 75 to 94; these read MPPP…EEEA and TSRK…PALA. A compositionally biased stretch (basic and acidic residues) spans 76 to 85; sequence SRKEEKDPGQ. The region spanning 172–332 is the Helicase ATP-binding domain; it reads LQTLKEHQVV…FSNAPVVQVP (161 aa). Position 185 to 192 (185 to 192) interacts with ATP; it reads GDTGCGKS. A DEAH box motif is present at residues 279 to 282; the sequence is DEVH. The Helicase C-terminal domain occupies 368-536; sequence SIDHKYPPEE…SLVLQMKSMS (169 aa). Residues 701 to 955 form a negatively regulates interaction with UPF1 region; the sequence is QAAQVGDSYS…LRARWESALD (255 aa). The disordered stretch occupies residues 724–766; that stretch reads LKRQHEEGAGRRRKVLRLQEEQDGGSSDEDRAGPAPPGASDGV. Residues serine 749 and serine 750 each carry the phosphoserine modification. The segment at 810–1143 is required for phosphorylation of UPF1. Not required for interaction with UPF1; that stretch reads PQLAVPDAFN…EVLRHRKQHV (334 aa). The segment at 957–1143 is required for the interaction with SMG1 and subsequent phosphorylation of UPF1; it reads QLAHQAQQQL…EVLRHRKQHV (187 aa).

The protein belongs to the DEAD box helicase family. DEAH subfamily. In terms of assembly, forms a complex with RUVBL1 and RUVBL2. Part of a complex composed of SMG1, DHX34 and UPF1; within the complex DHX34 acts as a scaffolding protein to facilitate SMG1 phosphorylation of UPF1. Interacts with UPF1, MOV10, EIF4A3, XRN2, SMG6, SMG7, SMG9, UPF3A, UPF3B, CASC3/MLN51, XRN1, DIS3 and DCP1A; the interactions are RNA-independent. Interacts with NCBP1/CPB80; the interaction is RNA-dependent. Interacts (via C-terminus) with SMG1; the interaction is RNA-independent. Expressed in whole blood, testis and spleen. Also expressed in the brain.

It carries out the reaction ATP + H2O = ADP + phosphate + H(+). In terms of biological role, probable ATP-binding RNA helicase required for nonsense-mediated decay (NMD) degradation of mRNA transcripts containing premature stop codons. Promotes the phosphorylation of UPF1 along with its interaction with key NMD pathway proteins UPF2 and EIF4A3. Interaction with the RUVBL1-RUVBL2 complex results in loss of nucleotide binding ability and ATP hydrolysis of the complex. Negatively regulates the nucleotide binding ability and ATP hydrolysis of the RUVBL1-RUVBL2 complex via induction of N-terminus conformation changes of the RUVBL2 subunits. The chain is Probable ATP-dependent RNA helicase DHX34 from Homo sapiens (Human).